Here is a 295-residue protein sequence, read N- to C-terminus: UDP-N-acetylenolpyruvoylglucosamine reductase (295 aa).

The FAD-binding PCMH-type domain maps to 23–188; sequence KVGGPADFLA…ISAKFALKPG (166 aa). Residue R167 is part of the active site. The active-site Proton donor is S217. E287 is a catalytic residue.

Belongs to the MurB family. The cofactor is FAD.

The protein localises to the cytoplasm. The catalysed reaction is UDP-N-acetyl-alpha-D-muramate + NADP(+) = UDP-N-acetyl-3-O-(1-carboxyvinyl)-alpha-D-glucosamine + NADPH + H(+). Its pathway is cell wall biogenesis; peptidoglycan biosynthesis. Functionally, cell wall formation. In Streptococcus pyogenes serotype M3 (strain ATCC BAA-595 / MGAS315), this protein is UDP-N-acetylenolpyruvoylglucosamine reductase.